A 153-amino-acid chain; its full sequence is Large ribosomal subunit protein uL22 (153 aa).

Belongs to the universal ribosomal protein uL22 family. As to quaternary structure, part of the 50S ribosomal subunit.

In terms of biological role, this protein binds specifically to 23S rRNA. It makes multiple contacts with different domains of the 23S rRNA in the assembled 50S subunit and ribosome. Functionally, the globular domain of the protein is located near the polypeptide exit tunnel on the outside of the subunit, while an extended beta-hairpin is found that lines the wall of the exit tunnel in the center of the 70S ribosome. The polypeptide is Large ribosomal subunit protein uL22 (Methanococcus maripaludis (strain C5 / ATCC BAA-1333)).